We begin with the raw amino-acid sequence, 362 residues long: 3-dehydroquinate synthase (362 aa).

NAD(+) contacts are provided by residues 70 to 75 (DGEKYK), 104 to 108 (GVIGD), 128 to 129 (TT), Lys-141, Lys-150, and 168 to 171 (TLNT). The Zn(2+) site is built by Glu-183, His-246, and His-263.

This sequence belongs to the sugar phosphate cyclases superfamily. Dehydroquinate synthase family. Co(2+) is required as a cofactor. It depends on Zn(2+) as a cofactor. NAD(+) serves as cofactor.

The protein localises to the cytoplasm. The catalysed reaction is 7-phospho-2-dehydro-3-deoxy-D-arabino-heptonate = 3-dehydroquinate + phosphate. The protein operates within metabolic intermediate biosynthesis; chorismate biosynthesis; chorismate from D-erythrose 4-phosphate and phosphoenolpyruvate: step 2/7. Functionally, catalyzes the conversion of 3-deoxy-D-arabino-heptulosonate 7-phosphate (DAHP) to dehydroquinate (DHQ). In Haemophilus influenzae (strain 86-028NP), this protein is 3-dehydroquinate synthase.